A 370-amino-acid polypeptide reads, in one-letter code: Adaptive-response sensory kinase SasA (370 aa).

One can recognise a Histidine kinase domain in the interval M152–Q365. Position 155 is a phosphohistidine; by autocatalysis (H155).

Homooligomerizes. Interacts with KaiC. Participates in the KaiBC complex, whose core is composed of a KaiC homohexamer and 6 KaiB.

The catalysed reaction is ATP + protein L-histidine = ADP + protein N-phospho-L-histidine.. In terms of biological role, member of the two-component regulatory system SasA/RpaA involved in genome-wide circadian gene expression. One of several clock output pathways. Participates in the Kai clock protein complex, the main circadian regulator in cyanobacteria, via its interaction with KaiC. KaiC enhances the autophosphorylation activity of SasA, which then transfers its phosphate group to RpaA to activate it. In addition to its output function, recruits fold-shifted KaiB (KaiB(fs)) to KaiC to cooperatively form the KaiB(6):KaiC(6) complex (independent of SasA kinase activity). Required for robustness of the circadian rhythm of gene expression and is involved in clock output, also required for adaptation to light/dark cycles. This Prochlorococcus marinus (strain MIT 9303) protein is Adaptive-response sensory kinase SasA.